The sequence spans 172 residues: Transcriptional repressor NrdR (172 aa).

A zinc finger spans residues 3 to 34 (CPYCRNTDTRVLDSRVADDGGSIRRRRTCSAC). An ATP-cone domain is found at 46–136 (LTVLKRSGAS…VYRAFESADD (91 aa)).

It belongs to the NrdR family. Zn(2+) is required as a cofactor.

Negatively regulates transcription of bacterial ribonucleotide reductase nrd genes and operons by binding to NrdR-boxes. The chain is Transcriptional repressor NrdR from Nocardioides sp. (strain ATCC BAA-499 / JS614).